Reading from the N-terminus, the 248-residue chain is MFLFLIFLVAVLPVNTEGGEIVWGTESKPHSRPYMASLMFYYGNSYRHYCGGFLVAKDIVMTAAHCNESNIKVILGAHNIKKRENTQVFSVVKAKPHENYDSHSLFNDIMLLKLERKAQLNGVVKTIALPRSQDWVKPGQVCTVAGWGRLANCTLSNTLQEVNLEVQKGQKCQGMSEDYNDSIQLCVGNPSEGKATGKGDSGGPFVCDGVAQGIVSRRLCTGTLPRVFTRISTFIPWIQKTMKLLQQP.

The first 18 residues, 1 to 18 (MFLFLIFLVAVLPVNTEG), serve as a signal peptide directing secretion. A propeptide spans 19 to 20 (GE) (activation peptide). The 223-residue stretch at 21 to 243 (IVWGTESKPH…FIPWIQKTMK (223 aa)) folds into the Peptidase S1 domain. Cysteines 50 and 66 form a disulfide. Active-site charge relay system residues include His-65 and Asp-108. Cystine bridges form between Cys-142/Cys-207 and Cys-172/Cys-186. N-linked (GlcNAc...) asparagine glycosylation is found at Asn-152 and Asn-180. Catalysis depends on Ser-201, which acts as the Charge relay system.

Belongs to the peptidase S1 family. Granzyme subfamily. In terms of tissue distribution, duodenum, lung and spleen.

In terms of biological role, this enzyme is necessary for target cell lysis in cell-mediated immune responses. In Rattus norvegicus (Rat), this protein is Granzyme-like protein 2.